The following is a 119-amino-acid chain: Holo-[acyl-carrier-protein] synthase (119 aa).

Mg(2+)-binding residues include aspartate 8 and glutamate 58.

The protein belongs to the P-Pant transferase superfamily. AcpS family. Requires Mg(2+) as cofactor.

It localises to the cytoplasm. It carries out the reaction apo-[ACP] + CoA = holo-[ACP] + adenosine 3',5'-bisphosphate + H(+). Functionally, transfers the 4'-phosphopantetheine moiety from coenzyme A to a Ser of acyl-carrier-protein. The chain is Holo-[acyl-carrier-protein] synthase from Streptococcus thermophilus (strain CNRZ 1066).